Consider the following 537-residue polypeptide: Phosphoenolpyruvate carboxykinase (ATP) (537 aa).

3 residues coordinate substrate: Arg-61, Tyr-195, and Lys-201. Residues Lys-201, His-220, and 236–244 (GLSGTGKTT) contribute to the ATP site. The Mn(2+) site is built by Lys-201 and His-220. Asp-257 provides a ligand contact to Mn(2+). Positions 285, 323, and 448 each coordinate ATP. Arg-323 is a substrate binding site.

Belongs to the phosphoenolpyruvate carboxykinase (ATP) family. Mn(2+) is required as a cofactor.

The protein resides in the cytoplasm. It carries out the reaction oxaloacetate + ATP = phosphoenolpyruvate + ADP + CO2. It functions in the pathway carbohydrate biosynthesis; gluconeogenesis. Its function is as follows. Involved in the gluconeogenesis. Catalyzes the conversion of oxaloacetate (OAA) to phosphoenolpyruvate (PEP) through direct phosphoryl transfer between the nucleoside triphosphate and OAA. The protein is Phosphoenolpyruvate carboxykinase (ATP) of Azorhizobium caulinodans (strain ATCC 43989 / DSM 5975 / JCM 20966 / LMG 6465 / NBRC 14845 / NCIMB 13405 / ORS 571).